Here is a 669-residue protein sequence, read N- to C-terminus: MSYSYEACFWDPNDNGVNILLGHISQGIRSCDSMILFFKQRSELEKDYARRLGAITGKLDKDIGTNMDYGKLNETFNVVLSVEKARAQSHSKQSEILFRQIYTDTKAFAANLQARYTTLSGKIERLRMDKFNKKKGCEVLQKKLQDAQIRFRDLQLNENNMIGAKRVEHNKRELLKWESNSQEYKVQLDVLKQEYKASQKFWIHEWAQLSCELQEMENARISFLQSKLQQFATSSMETYILEQTKMDMLTNHLNSFTAADEISTFSKENGTGRLKHKTSKGDMNSSANWAQMSSISTTSKKTESYMDNIRKLSSQLKETENKRKLASIDKYEKPLPSPEVTMATQFRNSTPVIRNETKVVANPTLSLRSSPVQLQSNVDDSVLRQKPDKPRPIVGEEQLKPDEDSKNPDEKGLMVHKRNQSLSSPSESSSSNPTDFSHIKKRQSMESMTTSVSSMANSIDDSQRFAKSWNSSNRKRKSMSHLQVPSSASSRSDDGGRTPNSAHNLNEDDYNTRRDTSTSTILFKPPVAVRGTSRGHTHRQSMIMQDSSNPIEDALYEMERIQSSSKPGTKTGNIMDERGVVRDRGITVTLPIVTSEGFPVIEYAKAMYPLIGNEAPGLANFHKGDYLLITEIVNKDWYKGEVYDNDRIDRNHRIGLIPYNFIQLLHQGL.

In terms of domain architecture, F-BAR spans 1-261; sequence MSYSYEACFW…HLNSFTAADE (261 aa). The stretch at 134-200 forms a coiled coil; sequence KKGCEVLQKK…LKQEYKASQK (67 aa). A phosphoserine mark is found at Ser337 and Ser366. The disordered stretch occupies residues 372–518; the sequence is VQLQSNVDDS…DYNTRRDTST (147 aa). Basic and acidic residues-rich tracts occupy residues 381–391 and 397–413; these read SVLRQKPDKPR and EQLK…EKGL. Ser421 carries the phosphoserine modification. Low complexity-rich tracts occupy residues 421 to 431 and 445 to 455; these read SLSSPSESSSS and MESMTTSVSSM. Residues 599–667 enclose the SH3 domain; sequence PVIEYAKAMY…PYNFIQLLHQ (69 aa).

As to quaternary structure, interacts with INN1.

The protein resides in the cytoplasm. Its subcellular location is the cytoskeleton. It localises to the bud neck. In terms of biological role, throughout most of the cell cycle it forms a double ring that coincides with the septins. After the onset of mitosis, forms a ring-like structure which colocalizes with the medial actin ring. Mediates cytoskeletal rearrangements required for cytokinesis. In conjunction with the medial actin ring exhibits contraction-like action. The protein is Cytokinesis protein 2 (HOF1) of Saccharomyces cerevisiae (strain ATCC 204508 / S288c) (Baker's yeast).